The primary structure comprises 150 residues: Large ribosomal subunit protein bL9 (150 aa).

The protein belongs to the bacterial ribosomal protein bL9 family.

Functionally, binds to the 23S rRNA. The chain is Large ribosomal subunit protein bL9 from Pectobacterium carotovorum subsp. carotovorum (strain PC1).